A 109-amino-acid chain; its full sequence is Nucleoid-associated protein BUsg_467 (109 aa).

Belongs to the YbaB/EbfC family. Homodimer.

The protein localises to the cytoplasm. It is found in the nucleoid. Binds to DNA and alters its conformation. May be involved in regulation of gene expression, nucleoid organization and DNA protection. The sequence is that of Nucleoid-associated protein BUsg_467 from Buchnera aphidicola subsp. Schizaphis graminum (strain Sg).